Reading from the N-terminus, the 250-residue chain is NWKCNLSKADIAELVSAFNAAPPIDAAHVQVVVAPPAVYLDSTRQALRADFDTSAQNAWISKGGAFTGELDAAMVKDVGAEWVILGHSERRHIAQLKESDHTIAMKAAYALQHASLGVIYCIGELLEERESGQTIAVCERQLQALSDAISDWSDVVIAYEPVWAIGTGKVATPEQAEQVHEAVRAWLANNVSPQVAASTRILYGGSVSPANCESLAKQPNIDGFLVGGASMKPTFLEIVDSYKATLAEAV.

Substrate contacts are provided by Asn-1 and Lys-3. His-87 acts as the Electrophile in catalysis. Glu-160 functions as the Proton acceptor in the catalytic mechanism.

Belongs to the triosephosphate isomerase family. In terms of assembly, homodimer.

Its subcellular location is the cytoplasm. It catalyses the reaction D-glyceraldehyde 3-phosphate = dihydroxyacetone phosphate. Its pathway is carbohydrate biosynthesis; gluconeogenesis. It functions in the pathway carbohydrate degradation; glycolysis; D-glyceraldehyde 3-phosphate from glycerone phosphate: step 1/1. This chain is Triosephosphate isomerase, cytosolic (TPI1), found in Gracilaria gracilis (Red alga).